We begin with the raw amino-acid sequence, 215 residues long: Pyrrolidone-carboxylate peptidase (215 aa).

Catalysis depends on residues glutamate 78, cysteine 141, and histidine 165.

It belongs to the peptidase C15 family. In terms of assembly, homotetramer.

It localises to the cytoplasm. The enzyme catalyses Release of an N-terminal pyroglutamyl group from a polypeptide, the second amino acid generally not being Pro.. Functionally, removes 5-oxoproline from various penultimate amino acid residues except L-proline. This chain is Pyrrolidone-carboxylate peptidase, found in Lacticaseibacillus paracasei (strain ATCC 334 / BCRC 17002 / CCUG 31169 / CIP 107868 / KCTC 3260 / NRRL B-441) (Lactobacillus paracasei).